A 263-amino-acid polypeptide reads, in one-letter code: H-2 class II histocompatibility antigen, A-U beta chain (263 aa).

The signal sequence occupies residues Met1 to Gly27. The beta-1 stretch occupies residues Gly28 to Leu120. Topologically, residues Gly28–Lys224 are extracellular. Disulfide bonds link Cys42–Cys104 and Cys143–Cys199. Asn46 carries N-linked (GlcNAc...) asparagine glycosylation. The beta-2 stretch occupies residues Glu121–Trp214. The region spanning Pro123–Thr211 is the Ig-like C1-type domain. A connecting peptide region spans residues Arg215–Lys224. Residues Met225–Ile245 traverse the membrane as a helical segment. Residues Arg246–Gln263 are Cytoplasmic-facing.

It belongs to the MHC class II family.

The protein localises to the membrane. This Mus musculus (Mouse) protein is H-2 class II histocompatibility antigen, A-U beta chain.